A 513-amino-acid chain; its full sequence is Glutamate--tRNA ligase 2 (513 aa).

Residues 11-21 (PSPTGFLHIGS) carry the 'HIGH' region motif. The 'KMSKS' region motif lies at 240–244 (KLSKR). An ATP-binding site is contributed by lysine 243. The 49-residue stretch at 335 to 383 (NTLLRHLPYREEFGGNTERSTAAYIDIREDASTGLTYKLPLAVELPKKF) folds into the RPE1 insert domain.

Belongs to the class-I aminoacyl-tRNA synthetase family. Glutamate--tRNA ligase type 1 subfamily. In terms of assembly, monomer.

It localises to the cytoplasm. The catalysed reaction is tRNA(Glu) + L-glutamate + ATP = L-glutamyl-tRNA(Glu) + AMP + diphosphate. In terms of biological role, catalyzes the attachment of glutamate to tRNA(Glu) in a two-step reaction: glutamate is first activated by ATP to form Glu-AMP and then transferred to the acceptor end of tRNA(Glu). The protein is Glutamate--tRNA ligase 2 of Rickettsia conorii (strain ATCC VR-613 / Malish 7).